The primary structure comprises 259 residues: PKHD-type hydroxylase PsycPRwf_1523 (259 aa).

The Fe2OG dioxygenase domain occupies 80-180; sequence VIMPPLFSAY…RLAMVTWVQS (101 aa). Fe cation-binding residues include His98, Asp100, and His161. Position 171 (Arg171) interacts with 2-oxoglutarate.

Fe(2+) is required as a cofactor. It depends on L-ascorbate as a cofactor.

This is PKHD-type hydroxylase PsycPRwf_1523 from Psychrobacter sp. (strain PRwf-1).